The chain runs to 424 residues: Adenylosuccinate synthetase 2 (424 aa).

Residues 11–17 (GDEGKGK) and 39–41 (GHT) each bind GTP. The active-site Proton acceptor is Asp-12. Asp-12 and Gly-39 together coordinate Mg(2+). Residues 12-15 (DEGK), 37-40 (NAGH), Thr-127, Arg-141, Gln-223, Thr-238, and Arg-302 each bind IMP. His-40 acts as the Proton donor in catalysis. A substrate-binding site is contributed by 298 to 304 (TTTGRGR). Residues Arg-304, 330–332 (KLD), and 412–414 (SVG) each bind GTP.

Belongs to the adenylosuccinate synthetase family. Homodimer. It depends on Mg(2+) as a cofactor.

The protein localises to the cytoplasm. It carries out the reaction IMP + L-aspartate + GTP = N(6)-(1,2-dicarboxyethyl)-AMP + GDP + phosphate + 2 H(+). It participates in purine metabolism; AMP biosynthesis via de novo pathway; AMP from IMP: step 1/2. Functionally, plays an important role in the de novo pathway of purine nucleotide biosynthesis. Catalyzes the first committed step in the biosynthesis of AMP from IMP. This Methanosarcina acetivorans (strain ATCC 35395 / DSM 2834 / JCM 12185 / C2A) protein is Adenylosuccinate synthetase 2.